Reading from the N-terminus, the 193-residue chain is Non-specific lipid transfer protein GPI-anchored 1 (193 aa).

Positions 1–22 (MKGLHLHLVLVTMTIVASIAAA) are cleaved as a signal peptide. 4 disulfides stabilise this stretch: Cys35/Cys76, Cys45/Cys60, Cys61/Cys106, and Cys74/Cys116. Residues Asn110 and Asn135 are each glycosylated (N-linked (GlcNAc...) asparagine). The segment at 138–161 (TTPVAPAGKSPATPATSTDKGGSA) is disordered. Asp165 is lipidated: GPI-anchor amidated aspartate. Residues 166-193 (GHAVVALAVALMAVSFVLTLPRHVTLGM) constitute a propeptide, removed in mature form.

This sequence belongs to the plant LTP family. Post-translationally, O-glycosylated on hydroxyprolines; noncontiguous hydroxylproline residues are glycosylated with arabinogalactan. As to expression, up-regulated in the epidermis of stems and leaves. Expressed in the epidermis, stem cortex, vascular bundles and mesophyll cells in root tips, cotyledons, seedlings, leaves, caulines, flowers, siliques, pollen, and early-developing seeds.

Its subcellular location is the cell membrane. It localises to the secreted. The protein resides in the cell wall. It is found in the endoplasmic reticulum. The protein localises to the golgi apparatus. In terms of biological role, lipid transfer protein that, together with LTPG2, binds to lipids and functions as a component of the cuticular lipid export machinery that performs extensive export of intracellular lipids (e.g. C29 alkane) from epidermal cells to the surface to build the cuticular wax layer and silique walls. Involved in the establishment of resistance to the necrotrophic fungal pathogen Alternaria brassicicola. Contributes to pre-invasive defense against some non-host powdery mildew pathogens by preventing the penetration of the epidermal cell wall by the fungal agents (e.g. Blumeria graminis f. sp. hordei (Bgh)). Maybe involved in seed and ovule maturation and development, probably by regulating the fatty acids homeostasis during suberin and sporopollenin biosynthesis or deposition. The polypeptide is Non-specific lipid transfer protein GPI-anchored 1 (Arabidopsis thaliana (Mouse-ear cress)).